The chain runs to 258 residues: Insulin-like growth factor-binding protein 4 (258 aa).

The N-terminal stretch at 1-21 is a signal peptide; the sequence is MLSLCLMAALLLAAGPGPSLG. The IGFBP N-terminal domain maps to 23–103; sequence EAIHCPPCSE…VHGQGVCMEL (81 aa). Cystine bridges form between C27-C53, C30-C55, C38-C56, C44-C59, C67-C80, and C74-C100. N125 carries an N-linked (GlcNAc...) asparagine glycan. 4 cysteine pairs are disulfide-bonded: C131–C138, C174–C204, C215–C226, and C228–C249. Residues 171 to 249 enclose the Thyroglobulin type-1 domain; it reads QGSCQSELHR…GLEPKGELDC (79 aa). Phosphoserine is present on S255.

As to quaternary structure, binds IGF2 more than IGF1.

It is found in the secreted. IGF-binding proteins prolong the half-life of the IGFs and have been shown to either inhibit or stimulate the growth promoting effects of the IGFs on cell culture. They alter the interaction of IGFs with their cell surface receptors. This chain is Insulin-like growth factor-binding protein 4 (IGFBP4), found in Bos taurus (Bovine).